The sequence spans 348 residues: D-alanine--D-alanine ligase (348 aa).

One can recognise an ATP-grasp domain in the interval 132-334; the sequence is KRVLESAGIP…YAELIEELVR (203 aa). Residue 162-217 participates in ATP binding; sequence EAALSYPVFVKPANMGSSVGISKAESEEELRAAILLALTYDSRILIEQGVLAREIE. Positions 288, 301, and 303 each coordinate Mg(2+).

This sequence belongs to the D-alanine--D-alanine ligase family. The cofactor is Mg(2+). Requires Mn(2+) as cofactor.

Its subcellular location is the cytoplasm. The catalysed reaction is 2 D-alanine + ATP = D-alanyl-D-alanine + ADP + phosphate + H(+). The protein operates within cell wall biogenesis; peptidoglycan biosynthesis. Functionally, cell wall formation. The protein is D-alanine--D-alanine ligase of Streptococcus equi subsp. zooepidemicus (strain H70).